A 681-amino-acid chain; its full sequence is DNA ligase (681 aa).

NAD(+) is bound by residues 35-39, 84-85, and Glu121; these read DAEYD and SI. Lys123 serves as the catalytic N6-AMP-lysine intermediate. The NAD(+) site is built by Arg144, Glu180, Lys300, and Lys324. Residues Cys418, Cys421, Cys436, and Cys442 each contribute to the Zn(2+) site. The BRCT domain maps to 601 to 681; sequence AADGPASGKT…GLRRLLEQPA (81 aa).

It belongs to the NAD-dependent DNA ligase family. LigA subfamily. Mg(2+) serves as cofactor. Requires Mn(2+) as cofactor.

The catalysed reaction is NAD(+) + (deoxyribonucleotide)n-3'-hydroxyl + 5'-phospho-(deoxyribonucleotide)m = (deoxyribonucleotide)n+m + AMP + beta-nicotinamide D-nucleotide.. Its function is as follows. DNA ligase that catalyzes the formation of phosphodiester linkages between 5'-phosphoryl and 3'-hydroxyl groups in double-stranded DNA using NAD as a coenzyme and as the energy source for the reaction. It is essential for DNA replication and repair of damaged DNA. The polypeptide is DNA ligase (Aromatoleum aromaticum (strain DSM 19018 / LMG 30748 / EbN1) (Azoarcus sp. (strain EbN1))).